The chain runs to 859 residues: Linoleate 9S-lipoxygenase B (859 aa).

Positions 34-158 (INIGASVVDG…RYKSDRIFFA (125 aa)) constitute a PLAT domain. Positions 161-859 (AYLPSETPQP…GKGIPNSVSI (699 aa)) constitute a Lipoxygenase domain. The disordered stretch occupies residues 213 to 246 (EYARPILGGSSEYPYPRRGRTGREPTKADPNCES). The span at 233-244 (TGREPTKADPNC) shows a compositional bias: basic and acidic residues. The Fe cation site is built by His-521, His-526, His-711, and Ile-859.

Belongs to the lipoxygenase family. As to quaternary structure, monomer. Requires Fe cation as cofactor. Fruit specific.

It localises to the cytoplasm. It carries out the reaction (9Z,12Z)-octadecadienoate + O2 = (9S)-hydroperoxy-(10E,12Z)-octadecadienoate. It participates in lipid metabolism; oxylipin biosynthesis. Functionally, plant lipoxygenase may be involved in a number of diverse aspects of plant physiology including growth and development, pest resistance, and senescence or responses to wounding. It catalyzes the hydroperoxidation of lipids containing a cis,cis-1,4-pentadiene structure. In Solanum lycopersicum (Tomato), this protein is Linoleate 9S-lipoxygenase B (LOX1.2).